The primary structure comprises 105 residues: ATPase inhibitor A, mitochondrial (105 aa).

The segment at 17 to 52 (MSSDQLGELGTGAGKGGGGGGSVRAAGGSFGRREAA) is disordered. The interval 22–51 (LGELGTGAGKGGGGGGSVRAAGGSFGRREA) is N-terminal inhibitory region. Residues 25-38 (LGTGAGKGGGGGGS) are compositionally biased toward gly residues. A coiled-coil region spans residues 58–105 (FRQKEREQLAALKNHHEEEIDHHKKEIERLQREIDRHKGKIRKLKHDD). The antiparallel alpha-helical coiled coil region stretch occupies residues 73-105 (HEEEIDHHKKEIERLQREIDRHKGKIRKLKHDD).

It belongs to the ATPase inhibitor family. Homodimer; represents the active form and is present at a pH value below 6.5. Homotetramer; represents the inactive form and is present at a pH value above 7.0.

The protein resides in the mitochondrion. Its function is as follows. Endogenous F(1)F(o)-ATPase inhibitor limiting ATP depletion when the mitochondrial membrane potential falls below a threshold and the F(1)F(o)-ATP synthase starts hydrolyzing ATP to pump protons out of the mitochondrial matrix. Required to avoid the consumption of cellular ATP when the F(1)F(o)-ATP synthase enzyme acts as an ATP hydrolase. Indirectly acts as a regulator of heme synthesis in erythroid tissues: regulates heme synthesis by modulating the mitochondrial pH and redox potential, allowing fech to efficiently catalyze the incorporation of iron into protoporphyrin IX to produce heme. The polypeptide is ATPase inhibitor A, mitochondrial (Danio rerio (Zebrafish)).